Here is a 445-residue protein sequence, read N- to C-terminus: 6-phosphogluconate dehydrogenase, decarboxylating (445 aa).

NADP(+) contacts are provided by residues 1–4 (AVMG), 22–24 (NRS), 63–65 (VQA), and Asn91. Residues Asn91 and 117 to 119 (SGG) contribute to the substrate site. Lys172 acts as the Proton acceptor in catalysis. 175-176 (HN) provides a ligand contact to substrate. Glu179 acts as the Proton donor in catalysis. Residues Tyr180, Lys249, Arg276, Arg434, and His440 each contribute to the substrate site.

This sequence belongs to the 6-phosphogluconate dehydrogenase family. In terms of assembly, homodimer.

The enzyme catalyses 6-phospho-D-gluconate + NADP(+) = D-ribulose 5-phosphate + CO2 + NADPH. It functions in the pathway carbohydrate degradation; pentose phosphate pathway; D-ribulose 5-phosphate from D-glucose 6-phosphate (oxidative stage): step 3/3. Functionally, catalyzes the oxidative decarboxylation of 6-phosphogluconate to ribulose 5-phosphate and CO(2), with concomitant reduction of NADP to NADPH. The sequence is that of 6-phosphogluconate dehydrogenase, decarboxylating (gnd) from Pseudescherichia vulneris (Escherichia vulneris).